A 359-amino-acid polypeptide reads, in one-letter code: 4-hydroxy-3-methylbut-2-en-1-yl diphosphate synthase (flavodoxin) (359 aa).

[4Fe-4S] cluster is bound by residues Cys-264, Cys-267, Cys-299, and Glu-306.

The protein belongs to the IspG family. The cofactor is [4Fe-4S] cluster.

The enzyme catalyses (2E)-4-hydroxy-3-methylbut-2-enyl diphosphate + oxidized [flavodoxin] + H2O + 2 H(+) = 2-C-methyl-D-erythritol 2,4-cyclic diphosphate + reduced [flavodoxin]. The protein operates within isoprenoid biosynthesis; isopentenyl diphosphate biosynthesis via DXP pathway; isopentenyl diphosphate from 1-deoxy-D-xylulose 5-phosphate: step 5/6. Converts 2C-methyl-D-erythritol 2,4-cyclodiphosphate (ME-2,4cPP) into 1-hydroxy-2-methyl-2-(E)-butenyl 4-diphosphate. In Helicobacter pylori (strain HPAG1), this protein is 4-hydroxy-3-methylbut-2-en-1-yl diphosphate synthase (flavodoxin).